Consider the following 201-residue polypeptide: Potassium-transporting ATPase KdpC subunit (201 aa).

The chain crosses the membrane as a helical span at residues 7–27; that stretch reads PALVLLVALTAITGLAYPLAV.

Belongs to the KdpC family. The system is composed of three essential subunits: KdpA, KdpB and KdpC.

Its subcellular location is the cell inner membrane. Its function is as follows. Part of the high-affinity ATP-driven potassium transport (or Kdp) system, which catalyzes the hydrolysis of ATP coupled with the electrogenic transport of potassium into the cytoplasm. This subunit acts as a catalytic chaperone that increases the ATP-binding affinity of the ATP-hydrolyzing subunit KdpB by the formation of a transient KdpB/KdpC/ATP ternary complex. The sequence is that of Potassium-transporting ATPase KdpC subunit from Methylorubrum extorquens (strain CM4 / NCIMB 13688) (Methylobacterium extorquens).